Here is a 303-residue protein sequence, read N- to C-terminus: DCN1-like protein 3 (303 aa).

A disordered region spans residues 1–40 (MGQCVTKCKNPSSTLGSKNGERESSKPHKRSSSHKEEHMS). Gly2 carries N-myristoyl glycine lipidation. A DCUN1 domain is found at 85–277 (SSLQRIEELF…LFDTFVEWEM (193 aa)).

As to quaternary structure, may interact (via the DCUN1 domain) with unneddylated cullins.

It is found in the cell membrane. It localises to the cytoplasm. The protein resides in the nucleus. Its subcellular location is the perinuclear region. Its function is as follows. Contributes to the neddylation of all cullins by transferring NEDD8 from N-terminally acetylated NEDD8-conjugating E2s enzyme to different cullin C-terminal domain-RBX complexes. At the cell membrane, can promote and as well inhibit cullins neddylation. The polypeptide is DCN1-like protein 3 (Xenopus laevis (African clawed frog)).